A 137-amino-acid chain; its full sequence is Small ribosomal subunit protein uS12 (137 aa).

Residues 1–57 are disordered; sequence MPTINQLVRKPRQSKSKKSDSPVLNRGFNSKKKQFTNLNSPQKRGVCTRVGTMTPRK. At Asp-102 the chain carries 3-methylthioaspartic acid. Residues 118–137 form a disordered region; it reads SGVDGRRQGRSLYGTKKPKN.

Belongs to the universal ribosomal protein uS12 family. In terms of assembly, part of the 30S ribosomal subunit. Contacts proteins S8 and S17. May interact with IF1 in the 30S initiation complex.

Functionally, with S4 and S5 plays an important role in translational accuracy. In terms of biological role, interacts with and stabilizes bases of the 16S rRNA that are involved in tRNA selection in the A site and with the mRNA backbone. Located at the interface of the 30S and 50S subunits, it traverses the body of the 30S subunit contacting proteins on the other side and probably holding the rRNA structure together. The combined cluster of proteins S8, S12 and S17 appears to hold together the shoulder and platform of the 30S subunit. This Staphylococcus haemolyticus (strain JCSC1435) protein is Small ribosomal subunit protein uS12.